Consider the following 98-residue polypeptide: Acylphosphatase (98 aa).

An Acylphosphatase-like domain is found at 12–98; the sequence is TYYVRVRGVV…ERRFDRFQQQ (87 aa). Catalysis depends on residues R27 and N45.

This sequence belongs to the acylphosphatase family.

It carries out the reaction an acyl phosphate + H2O = a carboxylate + phosphate + H(+). The polypeptide is Acylphosphatase (acyP) (Burkholderia ambifaria (strain ATCC BAA-244 / DSM 16087 / CCUG 44356 / LMG 19182 / AMMD) (Burkholderia cepacia (strain AMMD))).